Reading from the N-terminus, the 160-residue chain is Probable prefoldin subunit 5 (160 aa).

Belongs to the prefoldin subunit alpha family. Heterohexamer of two PFD-alpha type and four PFD-beta type subunits.

Binds specifically to cytosolic chaperonin (c-CPN) and transfers target proteins to it. Binds to nascent polypeptide chain and promotes folding in an environment in which there are many competing pathways for nonnative proteins. The polypeptide is Probable prefoldin subunit 5 (pfdn5) (Dictyostelium discoideum (Social amoeba)).